The chain runs to 87 residues: DNA-directed RNA polymerase subunit Rpo5 (87 aa).

The protein belongs to the archaeal Rpo5/eukaryotic RPB5 RNA polymerase subunit family. As to quaternary structure, part of the RNA polymerase complex.

It localises to the cytoplasm. The enzyme catalyses RNA(n) + a ribonucleoside 5'-triphosphate = RNA(n+1) + diphosphate. DNA-dependent RNA polymerase (RNAP) catalyzes the transcription of DNA into RNA using the four ribonucleoside triphosphates as substrates. The chain is DNA-directed RNA polymerase subunit Rpo5 from Thermoplasma acidophilum (strain ATCC 25905 / DSM 1728 / JCM 9062 / NBRC 15155 / AMRC-C165).